Reading from the N-terminus, the 495-residue chain is Pentatricopeptide repeat-containing protein PPR5 homolog, chloroplastic (495 aa).

The disordered stretch occupies residues 1-24; it reads MLAYPTTSSPWPPRHHGAAAAPAA. A chloroplast-targeting transit peptide spans 1 to 29; it reads MLAYPTTSSPWPPRHHGAAAAPAARRHMA. 9 PPR repeats span residues 120 to 154, 155 to 189, 195 to 229, 230 to 264, 265 to 299, 300 to 334, 335 to 365, 370 to 404, and 405 to 439; these read DNGI…GCRP, DTSV…MKTI, NIVT…PVSP, DIYT…QCRP, DVIT…KEKP, THPT…GFKP, NYVT…LVSS, HLSS…GAVP, and SAST…GIVP. Residues 455–495 form a disordered region; sequence DKKPRTVPSKNSASKPDVESANNSGTDTSSKPNLSVWQVAA. Residues 462–495 show a composition bias toward polar residues; the sequence is PSKNSASKPDVESANNSGTDTSSKPNLSVWQVAA.

This sequence belongs to the PPR family. P subfamily.

The protein localises to the plastid. It is found in the chloroplast. Functionally, involved in the biogenesis of the plastid translation machinery by promoting the splicing of group II introns in chloroplasts. This chain is Pentatricopeptide repeat-containing protein PPR5 homolog, chloroplastic, found in Oryza sativa subsp. japonica (Rice).